The chain runs to 109 residues: Parvalbumin, muscle (109 aa).

A1 carries the N-acetylalanine modification. EF-hand domains lie at K38–D73 and L77–S109. Ca(2+)-binding residues include D51, D53, S55, E62, D90, D92, D94, K96, and E101.

Belongs to the parvalbumin family.

In muscle, parvalbumin is thought to be involved in relaxation after contraction. It binds two calcium ions. The polypeptide is Parvalbumin, muscle (Gallus gallus (Chicken)).